The sequence spans 91 residues: Succinate dehydrogenase assembly factor 1A, mitochondrial (91 aa).

It belongs to the complex I LYR family. SDHAF1 subfamily. Interacts with the iron-sulfur protein subunit within the SDH catalytic dimer.

The protein localises to the mitochondrion matrix. Its function is as follows. Plays an essential role in the assembly of succinate dehydrogenase (SDH), an enzyme complex (also referred to as respiratory complex II) that is a component of both the tricarboxylic acid (TCA) cycle and the mitochondrial electron transport chain, and which couples the oxidation of succinate to fumarate with the reduction of ubiquinone (coenzyme Q) to ubiquinol. Promotes maturation of the iron-sulfur protein subunit of the SDH catalytic dimer, protecting it from the deleterious effects of oxidants. May act together with SDHAF3. This Dictyostelium discoideum (Social amoeba) protein is Succinate dehydrogenase assembly factor 1A, mitochondrial.